The chain runs to 316 residues: MTKREQSLATPYLQFDRTQWAALRDSVPLTLTEEEIVKLKGINEDLSLDEVAQIYLPLSRLLNFYISSNLRRQAVLEQFLGTDGQRIPYVIGIAGSVAVGKSTTARLLQALLSRWPEHRSVELITTDGFLHPNKVLNERGLMKKKGFPESYDMHNLVKFVSEVKSGADYVTAPVYSHLIYDVVPDGNKVIKQPDILILEGLNVLQSGMDYPHDPHHVFVSDFVDFSIYVDAPEDLLQSWYINRFLKFRQGAFSNPDSYFHNYAKLPETEAIKIATQLWNEINGLNLKQNILPTRERASLIMTKSANHAVESVRLRK.

Position 95-102 (95-102 (GSVAVGKS)) interacts with ATP.

The protein belongs to the prokaryotic pantothenate kinase family.

The protein resides in the cytoplasm. The catalysed reaction is (R)-pantothenate + ATP = (R)-4'-phosphopantothenate + ADP + H(+). The protein operates within cofactor biosynthesis; coenzyme A biosynthesis; CoA from (R)-pantothenate: step 1/5. The sequence is that of Pantothenate kinase from Yersinia pseudotuberculosis serotype O:3 (strain YPIII).